The primary structure comprises 233 residues: tRNA (guanine-N(1)-)-methyltransferase (233 aa).

Residues Gly121 and 140 to 145 (IGDYIL) each bind S-adenosyl-L-methionine.

Belongs to the RNA methyltransferase TrmD family. In terms of assembly, homodimer.

Its subcellular location is the cytoplasm. The catalysed reaction is guanosine(37) in tRNA + S-adenosyl-L-methionine = N(1)-methylguanosine(37) in tRNA + S-adenosyl-L-homocysteine + H(+). Functionally, specifically methylates guanosine-37 in various tRNAs. The chain is tRNA (guanine-N(1)-)-methyltransferase from Endomicrobium trichonymphae.